We begin with the raw amino-acid sequence, 428 residues long: 3-phosphoshikimate 1-carboxyvinyltransferase (428 aa).

Residues Lys22, Ser23, and Arg27 each contribute to the 3-phosphoshikimate site. Position 22 (Lys22) interacts with phosphoenolpyruvate. 2 residues coordinate phosphoenolpyruvate: Gly96 and Arg124. Ser170, Ser171, Gln172, Ser198, Asp314, Asn337, and Lys341 together coordinate 3-phosphoshikimate. Gln172 lines the phosphoenolpyruvate pocket. The active-site Proton acceptor is Asp314. The phosphoenolpyruvate site is built by Arg345, Arg387, and Lys412.

Belongs to the EPSP synthase family. In terms of assembly, monomer.

The protein localises to the cytoplasm. The enzyme catalyses 3-phosphoshikimate + phosphoenolpyruvate = 5-O-(1-carboxyvinyl)-3-phosphoshikimate + phosphate. Its pathway is metabolic intermediate biosynthesis; chorismate biosynthesis; chorismate from D-erythrose 4-phosphate and phosphoenolpyruvate: step 6/7. Catalyzes the transfer of the enolpyruvyl moiety of phosphoenolpyruvate (PEP) to the 5-hydroxyl of shikimate-3-phosphate (S3P) to produce enolpyruvyl shikimate-3-phosphate and inorganic phosphate. The chain is 3-phosphoshikimate 1-carboxyvinyltransferase from Shewanella denitrificans (strain OS217 / ATCC BAA-1090 / DSM 15013).